Here is a 160-residue protein sequence, read N- to C-terminus: Cytochrome b6-f complex subunit 4 (160 aa).

3 helical membrane-spanning segments follow: residues 36-56 (LLYL…GLAV), 95-115 (LLGV…PFIE), and 131-151 (LVFI…CLPI).

The protein belongs to the cytochrome b family. PetD subfamily. As to quaternary structure, the 4 large subunits of the cytochrome b6-f complex are cytochrome b6, subunit IV (17 kDa polypeptide, petD), cytochrome f and the Rieske protein, while the 4 small subunits are petG, petL, petM and petN. The complex functions as a dimer.

The protein resides in the plastid. The protein localises to the chloroplast thylakoid membrane. In terms of biological role, component of the cytochrome b6-f complex, which mediates electron transfer between photosystem II (PSII) and photosystem I (PSI), cyclic electron flow around PSI, and state transitions. The polypeptide is Cytochrome b6-f complex subunit 4 (Thalassiosira pseudonana (Marine diatom)).